A 317-amino-acid chain; its full sequence is Ciliary microtubule inner protein 2A (317 aa).

Residues 131–153 form a disordered region; that stretch reads TPDTPHPPCPPGRKGDSRDLGHP.

Belongs to the CIMIP2 family. Microtubule inner protein component of sperm flagellar doublet microtubules.

It localises to the cytoplasm. The protein localises to the cytoskeleton. The protein resides in the flagellum axoneme. Its function is as follows. Microtubule inner protein (MIP) part of the dynein-decorated doublet microtubules (DMTs) in flagellum axoneme. Binds to the intra-tubulin interfaces. This chain is Ciliary microtubule inner protein 2A, found in Homo sapiens (Human).